We begin with the raw amino-acid sequence, 102 residues long: MAGQKIRIRLKAYDHEVIDSSAKKIVETVTRTGASVAGPVPLPTEKNVYCVIKSPHKYKDSREHFEMRTHKRLIDILDPTPKTVDSLMRLDLPAGVDIEIKL.

Belongs to the universal ribosomal protein uS10 family. As to quaternary structure, part of the 30S ribosomal subunit.

In terms of biological role, involved in the binding of tRNA to the ribosomes. This chain is Small ribosomal subunit protein uS10, found in Streptomyces griseus subsp. griseus (strain JCM 4626 / CBS 651.72 / NBRC 13350 / KCC S-0626 / ISP 5235).